Here is a 315-residue protein sequence, read N- to C-terminus: Porphobilinogen deaminase (315 aa).

Cys234 is modified (S-(dipyrrolylmethanemethyl)cysteine).

This sequence belongs to the HMBS family. Monomer. The cofactor is dipyrromethane.

It catalyses the reaction 4 porphobilinogen + H2O = hydroxymethylbilane + 4 NH4(+). It participates in porphyrin-containing compound metabolism; protoporphyrin-IX biosynthesis; coproporphyrinogen-III from 5-aminolevulinate: step 2/4. Functionally, tetrapolymerization of the monopyrrole PBG into the hydroxymethylbilane pre-uroporphyrinogen in several discrete steps. In Mycolicibacterium paratuberculosis (strain ATCC BAA-968 / K-10) (Mycobacterium paratuberculosis), this protein is Porphobilinogen deaminase.